Reading from the N-terminus, the 97-residue chain is Large ribosomal subunit protein bL28 (97 aa).

This sequence belongs to the bacterial ribosomal protein bL28 family.

In Brucella ovis (strain ATCC 25840 / 63/290 / NCTC 10512), this protein is Large ribosomal subunit protein bL28.